Consider the following 147-residue polypeptide: MPDSMSHQMIMAFDFGTQKMGIAIGQAAIESSTPLALFPMKDGIPDWNQLLKIVKEWQPTLFLVGLPLNMDDSESELSARARKFARRLRHQTNITTWMVDERLTTREARDELESYQEQGRAKKIAADSIAASLLIQSWYRAPQGVQP.

The protein belongs to the YqgF nuclease family.

It localises to the cytoplasm. Its function is as follows. Could be a nuclease involved in processing of the 5'-end of pre-16S rRNA. The protein is Putative pre-16S rRNA nuclease of Acinetobacter baylyi (strain ATCC 33305 / BD413 / ADP1).